The following is a 445-amino-acid chain: Trigger factor (445 aa).

Residues 162 to 247 (GDQVTIDAIG…IKAVHTAEPT (86 aa)) form the PPIase FKBP-type domain.

This sequence belongs to the FKBP-type PPIase family. Tig subfamily.

The protein resides in the cytoplasm. The enzyme catalyses [protein]-peptidylproline (omega=180) = [protein]-peptidylproline (omega=0). In terms of biological role, involved in protein export. Acts as a chaperone by maintaining the newly synthesized protein in an open conformation. Functions as a peptidyl-prolyl cis-trans isomerase. The polypeptide is Trigger factor (Rickettsia conorii (strain ATCC VR-613 / Malish 7)).